Here is a 287-residue protein sequence, read N- to C-terminus: Heterodimeric geranylgeranyl pyrophosphate synthase small subunit 2, chloroplastic (287 aa).

Mg(2+)-binding residues include Glu-103 and Asp-109. Residues Lys-204, Gln-241, and Lys-250 each coordinate dimethylallyl diphosphate.

The protein belongs to the FPP/GGPP synthase family. As to quaternary structure, part of a heterodimeric geranyl(geranyl)diphosphate synthase. Mg(2+) serves as cofactor. Mainly expressed in trichomes, and, to a lower extent, in roots, leaves, flowers and stems.

Its subcellular location is the plastid. It is found in the chloroplast thylakoid membrane. Its function is as follows. Heterodimeric geranyl(geranyl)-diphosphate (GPP) synthase small subunit. The small subunit alone is inactive in vitro while the large subunit GGPPS1 catalyzes mainly the production of geranygeranyl-diphosphate in vitro. Upon association of the two subunits, the product profile changes and the production of gerany-diphosphate is strongly increased. The chain is Heterodimeric geranylgeranyl pyrophosphate synthase small subunit 2, chloroplastic from Cannabis sativa (Hemp).